The primary structure comprises 35 residues: UPF0387 membrane protein YohO (35 aa).

A helical membrane pass occupies residues 6–26; the sequence is IGVIALFLFMAFGGIGGVMLA.

This sequence belongs to the UPF0387 family.

The protein localises to the cell inner membrane. This is UPF0387 membrane protein YohO from Escherichia coli O8 (strain IAI1).